A 627-amino-acid polypeptide reads, in one-letter code: Pescadillo homolog (627 aa).

The BRCT domain occupies 321–414 (RLRTLFKGLK…QLLPTNKYFI (94 aa)). Disordered regions lie at residues 450–469 (HAQSDDDSEDEAQEEEETVD), 488–566 (YKKY…MVKP), and 595–627 (TIEASEKEARKTAKREARKEAAAAAAKASKLGK). 2 positions are modified to phosphoserine: S453 and S457. Composition is skewed to acidic residues over residues 454 to 469 (DDDSEDEAQEEEETVD) and 497 to 521 (VNEDEEDPEDEDDNEDDDEEEEELD). Residues 522 to 533 (EKTKRLQEEKQK) show a composition bias toward basic and acidic residues. Residues 540–549 (KVHKVNKRQV) are compositionally biased toward basic residues. Basic and acidic residues-rich tracts occupy residues 550–559 (HKAEVDEHRL) and 595–615 (TIEASEKEARKTAKREARKEA). A coiled-coil region spans residues 582-625 (KEKEEWLLRKKRRTIEASEKEARKTAKREARKEAAAAAAKASKL). Residues 616 to 627 (AAAAAKASKLGK) show a composition bias toward low complexity.

Belongs to the pescadillo family.

The protein localises to the nucleus. It is found in the nucleolus. The protein resides in the nucleoplasm. Functionally, required for maturation of ribosomal RNAs and formation of the large ribosomal subunit. This is Pescadillo homolog from Drosophila simulans (Fruit fly).